We begin with the raw amino-acid sequence, 240 residues long: Insulin-like growth factor-binding protein 3 receptor (240 aa).

Residues 1-38 (MGNCQAGHNLHLCLAHHPPLVCATLILLLLGLSGLGLG) form the signal peptide. At 39-204 (SFLLTHRTGL…SEELALCGSR (166 aa)) the chain is on the extracellular side. N-linked (GlcNAc...) asparagine glycosylation is found at N73, N101, and N167. The helical transmembrane segment at 205–225 (LLVLGSFLLLFCGLLCCVTAM) threads the bilayer. At 226–240 (CFHPRRESHWSRTRL) the chain is on the cytoplasmic side.

Interacts with IGFBP3. Interacts with CASP8. As to expression, widely expressed in normal tissues but suppressed in prostate and breast tumor.

It is found in the cell membrane. In terms of biological role, cell death receptor specific for IGFBP3, may mediate caspase-8-dependent apoptosis upon ligand binding. In Homo sapiens (Human), this protein is Insulin-like growth factor-binding protein 3 receptor (TMEM219).